The chain runs to 222 residues: Small ribosomal subunit protein eS1 (222 aa).

It belongs to the eukaryotic ribosomal protein eS1 family.

This chain is Small ribosomal subunit protein eS1, found in Methanocaldococcus jannaschii (strain ATCC 43067 / DSM 2661 / JAL-1 / JCM 10045 / NBRC 100440) (Methanococcus jannaschii).